A 323-amino-acid chain; its full sequence is MIDFGNFYQLIAKNNLQHWLNCLPAQLQEWQKAALHGNFKSWVKTLENLPEISPTQLDLKNGVIAERDPPLSAGEKICLTNILRIFMPWRKGPFSLYGINIDTEWRSDWKWDRVLPHISPLTGRTILDVGCGSGYHLWRMVGEGAELAVGIDPTQLFLCQFEAVRKLLGNDQRAHLLPLGIEQLPALAAFDTVFSMGVLYHRRSPLDHLWQLKNQLISDGELILESLVVEGDEHTCLIPGERYAQMRNVYFIPSAKMVKIWLEKCGFVDVKIVDQAVTATEEQRRTDWMKTESLSDFLDPTDSNKTIEGYPAPLRAILIARKP.

Residues lysine 91, tryptophan 105, lysine 110, glycine 130, 152–154 (DPT), 181–182 (IE), methionine 196, tyrosine 200, and arginine 315 each bind carboxy-S-adenosyl-L-methionine.

This sequence belongs to the class I-like SAM-binding methyltransferase superfamily. CmoB family. Homotetramer.

It carries out the reaction carboxy-S-adenosyl-L-methionine + 5-hydroxyuridine(34) in tRNA = 5-carboxymethoxyuridine(34) in tRNA + S-adenosyl-L-homocysteine + H(+). In terms of biological role, catalyzes carboxymethyl transfer from carboxy-S-adenosyl-L-methionine (Cx-SAM) to 5-hydroxyuridine (ho5U) to form 5-carboxymethoxyuridine (cmo5U) at position 34 in tRNAs. In Photorhabdus laumondii subsp. laumondii (strain DSM 15139 / CIP 105565 / TT01) (Photorhabdus luminescens subsp. laumondii), this protein is tRNA U34 carboxymethyltransferase.